A 434-amino-acid polypeptide reads, in one-letter code: N-lysine methyltransferase SMYD2-B (434 aa).

The region spanning 8-242 is the SET domain; the sequence is PGIEQFASPG…PGQEIYTSYI (235 aa). 18 to 20 is an S-adenosyl-L-methionine binding site; it reads KGR. Zn(2+) contacts are provided by C53, C56, C66, C69, C75, C79, H87, and C91. Residues 53–91 form an MYND-type zinc finger; it reads CEQCFTRKKGLAKCGKCKKAFYCNANCQKKNWPMHKLEC. Residues H138, 207–208, and 259–261 each bind S-adenosyl-L-methionine; these read NH and YYF.

The protein belongs to the class V-like SAM-binding methyltransferase superfamily.

It localises to the cytoplasm. It is found in the cytosol. The protein resides in the nucleus. It catalyses the reaction L-lysyl(4)-[histone H3] + 3 S-adenosyl-L-methionine = N(6),N(6),N(6)-trimethyl-L-lysyl(4)-[histone H3] + 3 S-adenosyl-L-homocysteine + 3 H(+). The enzyme catalyses L-lysyl-[protein] + S-adenosyl-L-methionine = N(6)-methyl-L-lysyl-[protein] + S-adenosyl-L-homocysteine + H(+). In terms of biological role, protein-lysine N-methyltransferase that methylates both histones and non-histone proteins, including p53/TP53 and RB1. Specifically trimethylates histone H3 'Lys-4' (H3K4me3) in vivo. The activity requires interaction with HSP90alpha. Shows even higher methyltransferase activity on p53/TP53. Monomethylates 'Lys-370' of p53/TP53, leading to decreased DNA-binding activity and subsequent transcriptional regulation activity of p53/TP53. Monomethylates RB1 at 'Lys-860'. This Danio rerio (Zebrafish) protein is N-lysine methyltransferase SMYD2-B (smyd2b).